We begin with the raw amino-acid sequence, 234 residues long: Sugar fermentation stimulation protein A (234 aa).

A DNA-binding region (H-T-H motif) is located at residues 201–220; the sequence is LLSEAQQRGVEILAYKAEIS.

Belongs to the SfsA family.

Functionally, binds to DNA non-specifically. Could be a regulatory factor involved in maltose metabolism. The chain is Sugar fermentation stimulation protein A from Shigella boydii serotype 4 (strain Sb227).